Reading from the N-terminus, the 314-residue chain is Deoxymugineic acid synthase 1 (314 aa).

Residue aspartate 44 coordinates NADP(+). Tyrosine 49 functions as the Proton donor in the catalytic mechanism. Histidine 112 provides a ligand contact to substrate. NADP(+) contacts are provided by residues 158–159 (CN), glutamine 180, 258–266 (FDEGRMKEN), and 273–281 (ELSEEERQR).

The protein belongs to the aldo/keto reductase family.

The catalysed reaction is 2'-deoxymugineate + NAD(+) = 3''-deamino-3''-oxonicotianamine + NADH + H(+). The enzyme catalyses 2'-deoxymugineate + NADP(+) = 3''-deamino-3''-oxonicotianamine + NADPH + H(+). It participates in siderophore biosynthesis. Functionally, catalyzes the reduction of a 3''-keto intermediate during the biosynthesis of 2'-deoxymugineic acid (DMA) from L-Met. Involved in the formation of phytosiderophores (MAs) belonging to the mugineic acid family and required to acquire iron. The sequence is that of Deoxymugineic acid synthase 1 from Zea mays (Maize).